Reading from the N-terminus, the 204-residue chain is Pro-hevein (204 aa).

Residues 1 to 17 (MNIFIVVLLCLTGVAIA) form the signal peptide. A Chitin-binding type-1 domain is found at 18 to 60 (EQCGRQAGGKLCPNNLCCSQWGWCGSTDEYCSPDHNCQSNCKD). 4 disulfide bridges follow: Cys-20–Cys-35, Cys-29–Cys-41, Cys-34–Cys-48, and Cys-54–Cys-58. Positions 61 to 66 (SGEGVG) are excised as a propeptide. The 122-residue stretch at 68–189 (GSASNVLATY…VNYQFVDCGD (122 aa)) folds into the Barwin domain. Intrachain disulfides connect Cys-96–Cys-128, Cys-117–Cys-151, and Cys-131–Cys-187.

Post-translationally, proteolytically processed to yield the two chains of the mature protein. Laticifer.

Its function is as follows. N-acetyl-D-glucosamine / N-acetyl-D-neuraminic acid binding lectin. Can inhibit fungal growth. The chain is Pro-hevein (HEV1) from Hevea brasiliensis (Para rubber tree).